The primary structure comprises 609 residues: UvrABC system protein C (609 aa).

Positions 16 to 94 (SSAGVYRMYD…IKQYMPKYNV (79 aa)) constitute a GIY-YIG domain. A UVR domain is found at 203–238 (KQVISELVAKMEEAAEQQAYEQAARFRDQIMALRRV).

Belongs to the UvrC family. Interacts with UvrB in an incision complex.

It is found in the cytoplasm. In terms of biological role, the UvrABC repair system catalyzes the recognition and processing of DNA lesions. UvrC both incises the 5' and 3' sides of the lesion. The N-terminal half is responsible for the 3' incision and the C-terminal half is responsible for the 5' incision. In Shewanella oneidensis (strain ATCC 700550 / JCM 31522 / CIP 106686 / LMG 19005 / NCIMB 14063 / MR-1), this protein is UvrABC system protein C.